We begin with the raw amino-acid sequence, 141 residues long: Hemoglobin subunit alpha-3 (141 aa).

The 141-residue stretch at 1–141 (VLSPADKTNV…VSTVLTSKYR (141 aa)) folds into the Globin domain. His-58 is a binding site for O2. His-87 lines the heme b pocket.

It belongs to the globin family. As to quaternary structure, heterotetramer of two alpha chains and two beta chains. Red blood cells.

Functionally, involved in oxygen transport from the lung to the various peripheral tissues. This Pan troglodytes (Chimpanzee) protein is Hemoglobin subunit alpha-3.